A 202-amino-acid polypeptide reads, in one-letter code: Nucleoside triphosphate pyrophosphatase (202 aa).

Aspartate 77 serves as the catalytic Proton acceptor.

Belongs to the Maf family. A divalent metal cation is required as a cofactor.

The protein localises to the cytoplasm. The catalysed reaction is a ribonucleoside 5'-triphosphate + H2O = a ribonucleoside 5'-phosphate + diphosphate + H(+). The enzyme catalyses a 2'-deoxyribonucleoside 5'-triphosphate + H2O = a 2'-deoxyribonucleoside 5'-phosphate + diphosphate + H(+). Its function is as follows. Nucleoside triphosphate pyrophosphatase. May have a dual role in cell division arrest and in preventing the incorporation of modified nucleotides into cellular nucleic acids. This Rickettsia canadensis (strain McKiel) protein is Nucleoside triphosphate pyrophosphatase.